We begin with the raw amino-acid sequence, 271 residues long: Imidazole glycerol phosphate synthase subunit HisF (271 aa).

Catalysis depends on residues Asp-12 and Asp-136.

The protein belongs to the HisA/HisF family. In terms of assembly, heterodimer of HisH and HisF.

The protein resides in the cytoplasm. The enzyme catalyses 5-[(5-phospho-1-deoxy-D-ribulos-1-ylimino)methylamino]-1-(5-phospho-beta-D-ribosyl)imidazole-4-carboxamide + L-glutamine = D-erythro-1-(imidazol-4-yl)glycerol 3-phosphate + 5-amino-1-(5-phospho-beta-D-ribosyl)imidazole-4-carboxamide + L-glutamate + H(+). It participates in amino-acid biosynthesis; L-histidine biosynthesis; L-histidine from 5-phospho-alpha-D-ribose 1-diphosphate: step 5/9. Functionally, IGPS catalyzes the conversion of PRFAR and glutamine to IGP, AICAR and glutamate. The HisF subunit catalyzes the cyclization activity that produces IGP and AICAR from PRFAR using the ammonia provided by the HisH subunit. This chain is Imidazole glycerol phosphate synthase subunit HisF, found in Natronomonas pharaonis (strain ATCC 35678 / DSM 2160 / CIP 103997 / JCM 8858 / NBRC 14720 / NCIMB 2260 / Gabara) (Halobacterium pharaonis).